The primary structure comprises 547 residues: Chaperonin GroEL (547 aa).

ATP is bound by residues 30–33 (TLGP), 87–91 (DGTTT), Gly414, 478–480 (DAL), and Asp494.

Belongs to the chaperonin (HSP60) family. In terms of assembly, forms a cylinder of 14 subunits composed of two heptameric rings stacked back-to-back. Interacts with the co-chaperonin GroES.

Its subcellular location is the cytoplasm. It catalyses the reaction ATP + H2O + a folded polypeptide = ADP + phosphate + an unfolded polypeptide.. In terms of biological role, together with its co-chaperonin GroES, plays an essential role in assisting protein folding. The GroEL-GroES system forms a nano-cage that allows encapsulation of the non-native substrate proteins and provides a physical environment optimized to promote and accelerate protein folding. The polypeptide is Chaperonin GroEL (Desulforudis audaxviator (strain MP104C)).